Here is a 205-residue protein sequence, read N- to C-terminus: Large ribosomal subunit protein uL4 (205 aa).

The disordered stretch occupies residues 47-70 (TRAQKSRAEVSGGGKKPFRQKGTG).

Belongs to the universal ribosomal protein uL4 family. As to quaternary structure, part of the 50S ribosomal subunit.

Functionally, one of the primary rRNA binding proteins, this protein initially binds near the 5'-end of the 23S rRNA. It is important during the early stages of 50S assembly. It makes multiple contacts with different domains of the 23S rRNA in the assembled 50S subunit and ribosome. Forms part of the polypeptide exit tunnel. This Acinetobacter baylyi (strain ATCC 33305 / BD413 / ADP1) protein is Large ribosomal subunit protein uL4.